The following is a 147-amino-acid chain: Protein phosphatase 1 regulatory subunit 14A (147 aa).

Residues 1–11 show a composition bias toward basic residues; that stretch reads MAAQRLGKRVL. The disordered stretch occupies residues 1–37; sequence MAAQRLGKRVLSKLQSPSRARGPGGSPSGLQKRHARV. Phosphoserine is present on Ser26. Residues 35 to 120 form an inhibitory region; it reads ARVTVKYDRR…LLAKLRGLHK (86 aa). Thr38 is modified (phosphothreonine). The segment at 118 to 147 is disordered; sequence LHKQPGFPQPSPSDDPSLSPRQDPAHTAPP. 3 positions are modified to phosphoserine: Ser128, Ser134, and Ser136.

Belongs to the PP1 inhibitor family.

Its subcellular location is the cytoplasm. In terms of biological role, inhibitor of PPP1CA. Has over 1000-fold higher inhibitory activity when phosphorylated, creating a molecular switch for regulating the phosphorylation status of PPP1CA substrates and smooth muscle contraction. In Rattus norvegicus (Rat), this protein is Protein phosphatase 1 regulatory subunit 14A (Ppp1r14a).